Here is a 429-residue protein sequence, read N- to C-terminus: Adenylosuccinate synthetase (429 aa).

GTP is bound by residues 12–18 (GDEGKGK) and 40–42 (GHT). Asp13 functions as the Proton acceptor in the catalytic mechanism. Asp13 and Gly40 together coordinate Mg(2+). Residues 13–16 (DEGK), 38–41 (NAGH), Thr128, Arg142, Gln223, Thr238, and Arg302 each bind IMP. His41 functions as the Proton donor in the catalytic mechanism. Residue 298-304 (TTTGRAR) coordinates substrate. Residues Arg304, 330–332 (SID), and 412–414 (SVG) contribute to the GTP site.

Belongs to the adenylosuccinate synthetase family. Homodimer. Mg(2+) is required as a cofactor.

The protein resides in the cytoplasm. It carries out the reaction IMP + L-aspartate + GTP = N(6)-(1,2-dicarboxyethyl)-AMP + GDP + phosphate + 2 H(+). It functions in the pathway purine metabolism; AMP biosynthesis via de novo pathway; AMP from IMP: step 1/2. Plays an important role in the de novo pathway of purine nucleotide biosynthesis. Catalyzes the first committed step in the biosynthesis of AMP from IMP. The chain is Adenylosuccinate synthetase from Oceanobacillus iheyensis (strain DSM 14371 / CIP 107618 / JCM 11309 / KCTC 3954 / HTE831).